A 266-amino-acid chain; its full sequence is Derlin-1 (266 aa).

Over 1 to 20 (MSSPGEFYNSLPPITKAYGT) the chain is Cytoplasmic. A helical transmembrane segment spans residues 21 to 41 (LCFFTTVATQLGLVAPVHIAL). Topologically, residues 42 to 55 (IPELVLKQFQIWRL) are lumenal. A helical membrane pass occupies residues 56–76 (ITNLFFLGGFSINFGIRLLMI). Topologically, residues 77–94 (ARYGVQLEKGPFERRTAD) are cytoplasmic. A helical transmembrane segment spans residues 95-115 (FLWMMIFGSFTLLVLSVIPFF). The Lumenal portion of the chain corresponds to 116–156 (WTPFLGVSLVFMLLYLWSREFPNANISLYGLVTLKAFYLPW). Residues 157-177 (AMLALDVIFGSPIMPDLLGII) traverse the membrane as a helical segment. Topologically, residues 178 to 266 (AGHLYYFLTV…FRGRSYRLTD (89 aa)) are cytoplasmic. The tract at residues 235 to 266 (GGVGGGGAYSSARAPPESSNTAFRGRSYRLTD) is disordered.

This sequence belongs to the derlin family.

It is found in the endoplasmic reticulum membrane. May be involved in the degradation process of specific misfolded endoplasmic reticulum (ER) luminal proteins. The protein is Derlin-1 (DER1) of Arabidopsis thaliana (Mouse-ear cress).